The sequence spans 339 residues: GTPase Obg (339 aa).

Positions 1 to 159 (MKFVDEAFVR…RELKLELKLL (159 aa)) constitute an Obg domain. Residues 127–147 (NTHFKSSTNRAPRRTTSGEEG) form a disordered region. Residues 160–333 (ADVGLLGLPN…LCYDLMSFLE (174 aa)) form the OBG-type G domain. GTP contacts are provided by residues 166–173 (GLPNAGKS), 191–195 (FTTLY), 213–216 (DIPG), 283–286 (NKID), and 314–316 (SAI). The Mg(2+) site is built by S173 and T193.

This sequence belongs to the TRAFAC class OBG-HflX-like GTPase superfamily. OBG GTPase family. As to quaternary structure, monomer. The cofactor is Mg(2+).

It localises to the cytoplasm. Functionally, an essential GTPase which binds GTP, GDP and possibly (p)ppGpp with moderate affinity, with high nucleotide exchange rates and a fairly low GTP hydrolysis rate. Plays a role in control of the cell cycle, stress response, ribosome biogenesis and in those bacteria that undergo differentiation, in morphogenesis control. In Coxiella burnetii (strain CbuG_Q212) (Coxiella burnetii (strain Q212)), this protein is GTPase Obg.